We begin with the raw amino-acid sequence, 397 residues long: Mycinamicin IV hydroxylase/epoxidase (397 aa).

Residues 63–86 are disordered; it reads RGPSMTRDEPRTRPEMVKGGLLSM. Residues 68–78 are compositionally biased toward basic and acidic residues; the sequence is TRDEPRTRPEM. Gly-81 is a substrate binding site. Positions 91, 95, 288, 344, and 346 each coordinate heme.

It belongs to the cytochrome P450 family. The cofactor is heme.

The protein operates within antibiotic biosynthesis; mycinamicin biosynthesis. In terms of biological role, involved in the biosynthesis of mycinamicin, a 16-membered macrolide antibiotic. Catalyzes consecutive hydroxylation (at C14) and epoxidation (at C12-C13) reactions with mycinamicin IV as initial substrate, leading to mycinamicin II. These reactions require prior dimethylation of 6-deoxyallose to mycinose for effective conversion by the dual function MycG enzyme. In Micromonospora griseorubida, this protein is Mycinamicin IV hydroxylase/epoxidase.